The primary structure comprises 328 residues: m7GpppN-mRNA hydrolase NUDT17 (328 aa).

A Nudix hydrolase domain is found at 90 to 236; it reads GVDLGVAVIL…DGTETPGLLP (147 aa). The short motif at 127 to 148 is the Nudix box element; that stretch reads GHVELEEELLDGGLRELWEESG. Mg(2+) is bound by residues E142 and E146. The tract at residues 299 to 328 is disordered; that stretch reads PCKSAAYLDPGPAKEEWNMDPLPPNQGSGK.

Belongs to the Nudix hydrolase family. The cofactor is Mg(2+). Mn(2+) serves as cofactor.

The catalysed reaction is a 5'-end (N(7)-methyl 5'-triphosphoguanosine)-ribonucleoside in mRNA + H2O = N(7)-methyl-GDP + a 5'-end phospho-ribonucleoside in mRNA + 2 H(+). In terms of biological role, acts as a decapping enzyme capable of hydrolyzing monomethylated capped RNAs (in vitro). Hydrolyzes monomethylated capped RNA after alpha and beta phosphates to form N(7)-methyl-GDP. Shows low activity towards unmethylated capped RNA. This Homo sapiens (Human) protein is m7GpppN-mRNA hydrolase NUDT17 (NUDT17).